The chain runs to 231 residues: Aminodeoxyfutalosine nucleosidase (231 aa).

The active-site Proton acceptor is Glu14. Substrate-binding positions include Gly81, Val155, and 175–176; that span reads ME. Catalysis depends on Asp199, which acts as the Proton donor.

The protein belongs to the PNP/UDP phosphorylase family. In terms of assembly, homodimer.

It catalyses the reaction 6-amino-6-deoxyfutalosine + H2O = dehypoxanthine futalosine + adenine. The enzyme catalyses S-adenosyl-L-homocysteine + H2O = S-(5-deoxy-D-ribos-5-yl)-L-homocysteine + adenine. It carries out the reaction S-methyl-5'-thioadenosine + H2O = 5-(methylsulfanyl)-D-ribose + adenine. The catalysed reaction is 5'-deoxyadenosine + H2O = 5-deoxy-D-ribose + adenine. The protein operates within quinol/quinone metabolism; menaquinone biosynthesis. Its pathway is amino-acid biosynthesis; L-methionine biosynthesis via salvage pathway; S-methyl-5-thio-alpha-D-ribose 1-phosphate from S-methyl-5'-thioadenosine (hydrolase route): step 1/2. Functionally, catalyzes the direct conversion of aminodeoxyfutalosine (AFL) into dehypoxanthine futalosine (DHFL) and adenine via the hydrolysis of the N-glycosidic bond; this reaction seems to represent an essential step in the menaquinone biosynthesis pathway in Helicobacter species. Can also probably catalyzes the hydrolysis of 5'-methylthioadenosine (MTA) and S-adenosylhomocysteine (SAH) to adenine and the corresponding thioribose, 5'-methylthioribose and S-ribosylhomocysteine, respectively. These other activities highlight the tremendous versatility of the enzyme, which also plays key roles in S-adenosylmethionine recycling and in the biosynthesis of the quorum-sensing molecule autoinducer-2. Does not act on futalosine (FL) as substrate. The chain is Aminodeoxyfutalosine nucleosidase (mtnN) from Helicobacter pylori (strain ATCC 700392 / 26695) (Campylobacter pylori).